A 160-amino-acid polypeptide reads, in one-letter code: Baculoviral IAP repeat-containing protein 5.1-A (160 aa).

The BIR repeat unit spans residues 27–97 (RLATFADWPF…KRSANCGFLS (71 aa)). Thr-43 carries the phosphothreonine; by CDK1 modification. Zn(2+)-binding residues include Cys-66, Cys-69, His-86, and Cys-93.

The protein belongs to the IAP family. In terms of assembly, component of the CPC at least composed of survivin/birc5, incenp, cdca8/borealin and/or cdca9/dasra-A, and aurkb/aurora-B. Interacts directly with incenp (via N-terminus), and may weakly interact with aurkb (via N-terminus) to stabilize the complex. Interacts with GTP-bound ran in both the S and M phases of the cell cycle. Also found in a complex with ubiquitin-mediated signaling proteins including at least usp9x/xFAM, nploc4/npl4 and ufd1. Post-translationally, ubiquitination is required for centrosome-targeting.

The protein localises to the cytoplasm. It localises to the nucleus. It is found in the chromosome. The protein resides in the centromere. Its subcellular location is the cytoskeleton. The protein localises to the spindle. Its function is as follows. Component of the chromosomal passenger complex (CPC), a complex that acts as a key regulator of mitosis. The CPC complex has essential functions at the centromere in ensuring correct chromosome alignment and segregation and is required for chromatin-induced microtubule stabilization and spindle assembly. Stimulates the mitotic kinase activity of aurkb/aurora-B in the CPC. Does not appear to exhibit anti-apoptotic activity. This is Baculoviral IAP repeat-containing protein 5.1-A (birc5.1-a) from Xenopus laevis (African clawed frog).